The sequence spans 465 residues: Phospholipase A1-II 5 (465 aa).

Ser-233 functions as the Acyl-ester intermediate in the catalytic mechanism. Catalysis depends on charge relay system residues Ser-233, Asp-297, and His-336.

It belongs to the AB hydrolase superfamily. Lipase family.

Its subcellular location is the cytoplasm. Its function is as follows. Acylhydrolase that catalyzes the hydrolysis of phospholipids at the sn-1 position. The polypeptide is Phospholipase A1-II 5 (Oryza sativa subsp. indica (Rice)).